A 194-amino-acid polypeptide reads, in one-letter code: Peptidyl-tRNA hydrolase (194 aa).

Residue Y16 participates in tRNA binding. Catalysis depends on H21, which acts as the Proton acceptor. TRNA is bound by residues F67, N69, and N115.

Belongs to the PTH family. In terms of assembly, monomer.

The protein resides in the cytoplasm. It carries out the reaction an N-acyl-L-alpha-aminoacyl-tRNA + H2O = an N-acyl-L-amino acid + a tRNA + H(+). Its function is as follows. Hydrolyzes ribosome-free peptidyl-tRNAs (with 1 or more amino acids incorporated), which drop off the ribosome during protein synthesis, or as a result of ribosome stalling. Functionally, catalyzes the release of premature peptidyl moieties from peptidyl-tRNA molecules trapped in stalled 50S ribosomal subunits, and thus maintains levels of free tRNAs and 50S ribosomes. The protein is Peptidyl-tRNA hydrolase of Colwellia psychrerythraea (strain 34H / ATCC BAA-681) (Vibrio psychroerythus).